Here is a 192-residue protein sequence, read N- to C-terminus: Amelogenin, Y isoform (192 aa).

A signal peptide spans 1 to 16 (MGTWILFACLLGAAYS). The interval 73–192 (QSPQNHALQP…TDKTKREEVD (120 aa)) is disordered. Residues 87–105 (PMVPAQQPVVPQQPMMPVP) show a composition bias toward low complexity. A compositionally biased stretch (polar residues) spans 108-117 (HSMTPIQHHQ). The segment covering 132 to 173 (PIQPQPHQPLQPQPPVHPIQRLPPQPPLPPIFPMQPLPPVLP) has biased composition (pro residues).

The protein belongs to the amelogenin family.

The protein resides in the secreted. The protein localises to the extracellular space. Its subcellular location is the extracellular matrix. Plays a role in the biomineralization of teeth. Seems to regulate the formation of crystallites during the secretory stage of tooth enamel development. Thought to play a major role in the structural organization and mineralization of developing enamel. The sequence is that of Amelogenin, Y isoform (AMELY) from Bos taurus (Bovine).